The primary structure comprises 815 residues: Lon protease 1 (815 aa).

One can recognise a Lon N-terminal domain in the interval 19-212 (MPLLPLRDIV…KLFGQIRSEI (194 aa)). 364-371 (GPPGVGKT) serves as a coordination point for ATP. The Lon proteolytic domain occupies 601 to 782 (KDEIGLAVGL…DDVLRKAMVV (182 aa)). Residues Ser-688 and Lys-731 contribute to the active site. The tract at residues 793 to 815 (EAGAQQAVMFEQKPPAADEIRAH) is disordered.

Belongs to the peptidase S16 family. As to quaternary structure, homohexamer. Organized in a ring with a central cavity.

Its subcellular location is the cytoplasm. The catalysed reaction is Hydrolysis of proteins in presence of ATP.. In terms of biological role, ATP-dependent serine protease that mediates the selective degradation of mutant and abnormal proteins as well as certain short-lived regulatory proteins. Required for cellular homeostasis and for survival from DNA damage and developmental changes induced by stress. Degrades polypeptides processively to yield small peptide fragments that are 5 to 10 amino acids long. Binds to DNA in a double-stranded, site-specific manner. This chain is Lon protease 1, found in Syntrophobacter fumaroxidans (strain DSM 10017 / MPOB).